The following is a 428-amino-acid chain: Succinyl-CoA--L-malate CoA-transferase alpha subunit (428 aa).

A disordered region spans residues 1-31; that stretch reads MPPTGEEPSGHAESKPPASDPMSTPGTGQEQ. Polar residues predominate over residues 21–31; sequence PMSTPGTGQEQ. The Nucleophile role is filled by Asp-200.

It belongs to the CoA-transferase III family. As to quaternary structure, forms a large complex composed of six heterodimers (alpha, beta).

It catalyses the reaction succinyl-CoA + (S)-malate = (S)-malyl-CoA + succinate. It carries out the reaction (3S)-citramalate + succinyl-CoA = (3S)-citramalyl-CoA + succinate. Functionally, involved in the 3-hydroxypropionate cycle used for autotrophic carbon dioxide fixation. Catalyzes the transfer of CoA moiety from succinyl-CoA to L-malate to yield L-malyl-CoA. It is highly specific for succinyl-CoA as the CoA donor, however it can accept L-citramalate instead of L-malate as the CoA acceptor. In Chloroflexus aurantiacus, this protein is Succinyl-CoA--L-malate CoA-transferase alpha subunit (smtA).